The primary structure comprises 256 residues: C-8 sterol isomerase (256 aa).

The interval 1–31 is disordered; sequence MPPKKQSSSGGNKPSGSGSSSGRSSSGSSCR. A compositionally biased stretch (low complexity) spans 7-30; the sequence is SSSGGNKPSGSGSSSGRSSSGSSC. A helical transmembrane segment spans residues 40–60; that stretch reads IGGWLKFFAILFALVAPIAYV.

It belongs to the ERG2 family.

The protein localises to the endoplasmic reticulum membrane. It participates in steroid metabolism; ergosterol biosynthesis; ergosterol from zymosterol: step 2/5. Catalyzes the reaction which results in unsaturation at C-7 in the B ring of sterols. The protein is C-8 sterol isomerase (erg-1) of Neurospora crassa (strain ATCC 24698 / 74-OR23-1A / CBS 708.71 / DSM 1257 / FGSC 987).